Consider the following 345-residue polypeptide: Anthranilate phosphoribosyltransferase (345 aa).

5-phospho-alpha-D-ribose 1-diphosphate contacts are provided by residues glycine 75, 78–79 (GD), serine 83, 85–88 (NIST), 103–111 (KHGNRAASS), and glycine 115. Glycine 75 is a binding site for anthranilate. Serine 87 serves as a coordination point for Mg(2+). Position 106 (asparagine 106) interacts with anthranilate. Anthranilate is bound at residue arginine 161. Aspartate 219 and glutamate 220 together coordinate Mg(2+).

This sequence belongs to the anthranilate phosphoribosyltransferase family. Homodimer. Requires Mg(2+) as cofactor.

It catalyses the reaction N-(5-phospho-beta-D-ribosyl)anthranilate + diphosphate = 5-phospho-alpha-D-ribose 1-diphosphate + anthranilate. The protein operates within amino-acid biosynthesis; L-tryptophan biosynthesis; L-tryptophan from chorismate: step 2/5. In terms of biological role, catalyzes the transfer of the phosphoribosyl group of 5-phosphorylribose-1-pyrophosphate (PRPP) to anthranilate to yield N-(5'-phosphoribosyl)-anthranilate (PRA). In Nocardia farcinica (strain IFM 10152), this protein is Anthranilate phosphoribosyltransferase.